The primary structure comprises 426 residues: Histone-binding protein RBBP7 (426 aa).

7 WD repeats span residues 47–123 (QWLP…KINH), 129–174 (RARY…LRLR), 182–218 (GLSW…KIVD), 229–270 (VVED…HSVD), 276–313 (VNCL…LHSF), 319–370 (EIFQ…LFIH), and 377–404 (ISDF…VWQM).

This sequence belongs to the WD repeat RBAP46/RBAP48/MSI1 family. In terms of assembly, binds directly to helix 1 of the histone fold of histone H4, a region that is not accessible when H4 is in chromatin.

Its subcellular location is the nucleus. Core histone-binding subunit that may target chromatin remodeling factors, histone acetyltransferases and histone deacetylases to their histone substrates in a manner that is regulated by nucleosomal DNA. Component of several complexes which regulate chromatin metabolism. This Danio rerio (Zebrafish) protein is Histone-binding protein RBBP7 (rbbp7).